We begin with the raw amino-acid sequence, 284 residues long: Prolyl 4-hydroxylase subunit alpha (284 aa).

The Fe2OG dioxygenase domain maps to 169 to 284; the sequence is NFNSIKTQTQ…PRIAITTWIY (116 aa). Residues His-191, Asp-193, and His-266 each contribute to the Fe cation site. Residue Arg-276 coordinates 2-oxoglutarate.

The protein belongs to the P4HA family. In terms of assembly, heterotetramer of two alpha-1 chains and two beta chains (the beta chain is the multi-functional PDI). The cofactor is Fe(2+). Requires L-ascorbate as cofactor.

The protein localises to the cytoplasm. The enzyme catalyses L-prolyl-[Skp1 protein] + 2-oxoglutarate + O2 = trans-4-hydroxy-L-prolyl-[Skp1 protein] + succinate + CO2. Inhibited by the prolyl-hydroxylase inhibitors alpha,alpha'-dipyridyl and ethyl 3,4-dihydroxybenzoate. Catalyzes the post-translational formation of 4-hydroxyproline. Probably hydroxylates skp1 on Pro-143. The sequence is that of Prolyl 4-hydroxylase subunit alpha (phyA) from Dictyostelium discoideum (Social amoeba).